The primary structure comprises 328 residues: N-acyl-aromatic-L-amino acid amidohydrolase (carboxylate-forming) A (328 aa).

Zn(2+) is bound by residues histidine 30 and glutamate 33. Residues arginine 74 and 81 to 82 contribute to the substrate site; that span reads NR. Histidine 127 lines the Zn(2+) pocket. Residues glutamate 189 and tyrosine 300 each coordinate substrate.

It belongs to the AspA/AstE family. Aspartoacylase subfamily. In terms of assembly, homotetramer. Zn(2+) is required as a cofactor.

The protein localises to the apical cell membrane. It localises to the cytoplasm. The enzyme catalyses an N-acyl-aromatic L-alpha-amino acid + H2O = an aromatic L-alpha-amino acid + a carboxylate. It carries out the reaction an N-acetyl-L-cysteine-S-conjugate + H2O = an S-substituted L-cysteine + acetate. Its function is as follows. Plays an important role in deacetylating mercapturic acids in kidney proximal tubules. The chain is N-acyl-aromatic-L-amino acid amidohydrolase (carboxylate-forming) A (acy3.1) from Danio rerio (Zebrafish).